A 437-amino-acid chain; its full sequence is Trigger factor (437 aa).

In terms of domain architecture, PPIase FKBP-type spans 164-249 (GDFAKFDFEG…LHEIQCKKIG (86 aa)).

It belongs to the FKBP-type PPIase family. Tig subfamily.

The protein resides in the cytoplasm. The enzyme catalyses [protein]-peptidylproline (omega=180) = [protein]-peptidylproline (omega=0). In terms of biological role, involved in protein export. Acts as a chaperone by maintaining the newly synthesized protein in an open conformation. Functions as a peptidyl-prolyl cis-trans isomerase. This Campylobacter hominis (strain ATCC BAA-381 / DSM 21671 / CCUG 45161 / LMG 19568 / NCTC 13146 / CH001A) protein is Trigger factor.